A 316-amino-acid polypeptide reads, in one-letter code: Arabinooligosaccharides transport system permease protein AraP (316 aa).

7 helical membrane passes run 32–52, 94–114, 128–148, 178–198, 224–244, 254–274, and 283–303; these read VVPY…SFYP, TYMI…AVLL, ALFL…RLMF, MFLM…LYFL, FYVT…ISVI, FVFW…GYLY, and MGFG…ISIT. The 216-residue stretch at 89–304 folds into the ABC transmembrane type-1 domain; that stretch reads LQNTTTYMIL…LIIFVISITQ (216 aa).

Belongs to the binding-protein-dependent transport system permease family. MalFG subfamily. The complex is composed of two ATP-binding proteins (MsmX), two transmembrane proteins (AraP and AraQ) and a solute-binding protein (AraN).

The protein resides in the cell membrane. Part of the ABC transporter complex AraNPQ involved in the uptake of arabinooligosaccharides. Responsible for the translocation of the substrate across the membrane. The chain is Arabinooligosaccharides transport system permease protein AraP (araP) from Halalkalibacterium halodurans (strain ATCC BAA-125 / DSM 18197 / FERM 7344 / JCM 9153 / C-125) (Bacillus halodurans).